The primary structure comprises 193 residues: Protein GrpE (193 aa).

The segment covering 1-22 (MDPKEKEKMAEELNVEETKDTA) has biased composition (basic and acidic residues). Residues 1 to 45 (MDPKEKEKMAEELNVEETKDTAEEQPQDDQAEEAAPLTHEEQLEK) form a disordered region. Over residues 23–32 (EEQPQDDQAE) the composition is skewed to acidic residues.

It belongs to the GrpE family. In terms of assembly, homodimer.

It localises to the cytoplasm. Participates actively in the response to hyperosmotic and heat shock by preventing the aggregation of stress-denatured proteins, in association with DnaK and GrpE. It is the nucleotide exchange factor for DnaK and may function as a thermosensor. Unfolded proteins bind initially to DnaJ; upon interaction with the DnaJ-bound protein, DnaK hydrolyzes its bound ATP, resulting in the formation of a stable complex. GrpE releases ADP from DnaK; ATP binding to DnaK triggers the release of the substrate protein, thus completing the reaction cycle. Several rounds of ATP-dependent interactions between DnaJ, DnaK and GrpE are required for fully efficient folding. In Bacteroides thetaiotaomicron (strain ATCC 29148 / DSM 2079 / JCM 5827 / CCUG 10774 / NCTC 10582 / VPI-5482 / E50), this protein is Protein GrpE.